A 170-amino-acid chain; its full sequence is Acireductone dioxygenase (170 aa).

Fe(2+) contacts are provided by H99, H101, E105, and H144. Residues H99, H101, E105, and H144 each contribute to the Ni(2+) site.

Belongs to the acireductone dioxygenase (ARD) family. In terms of assembly, monomer. The cofactor is Fe(2+). It depends on Ni(2+) as a cofactor.

The catalysed reaction is 1,2-dihydroxy-5-(methylsulfanyl)pent-1-en-3-one + O2 = 3-(methylsulfanyl)propanoate + CO + formate + 2 H(+). It catalyses the reaction 1,2-dihydroxy-5-(methylsulfanyl)pent-1-en-3-one + O2 = 4-methylsulfanyl-2-oxobutanoate + formate + 2 H(+). It participates in amino-acid biosynthesis; L-methionine biosynthesis via salvage pathway; L-methionine from S-methyl-5-thio-alpha-D-ribose 1-phosphate: step 5/6. Functionally, catalyzes 2 different reactions between oxygen and the acireductone 1,2-dihydroxy-3-keto-5-methylthiopentene (DHK-MTPene) depending upon the metal bound in the active site. Fe-containing acireductone dioxygenase (Fe-ARD) produces formate and 2-keto-4-methylthiobutyrate (KMTB), the alpha-ketoacid precursor of methionine in the methionine recycle pathway. Ni-containing acireductone dioxygenase (Ni-ARD) produces methylthiopropionate, carbon monoxide and formate, and does not lie on the methionine recycle pathway. In Bacillus cereus (strain ATCC 14579 / DSM 31 / CCUG 7414 / JCM 2152 / NBRC 15305 / NCIMB 9373 / NCTC 2599 / NRRL B-3711), this protein is Acireductone dioxygenase.